A 141-amino-acid chain; its full sequence is Lutropin subunit beta (141 aa).

An N-terminal signal peptide occupies residues 1–20; that stretch reads MEMLQGLLLWLLLNVGGVWA. 6 disulfides stabilise this stretch: Cys29–Cys77, Cys43–Cys92, Cys46–Cys130, Cys54–Cys108, Cys58–Cys110, and Cys113–Cys120. A glycan (N-linked (GlcNAc...) asparagine) is linked at Asn33.

This sequence belongs to the glycoprotein hormones subunit beta family. As to quaternary structure, heterodimer of a common alpha chain and a unique beta chain which confers biological specificity to thyrotropin, lutropin, follitropin and gonadotropin.

It is found in the secreted. Functionally, promotes spermatogenesis and ovulation by stimulating the testes and ovaries to synthesize steroids. This Ailurus fulgens (Himalayan red panda) protein is Lutropin subunit beta (LHB).